The sequence spans 231 residues: 5'-methylthioadenosine/S-adenosylhomocysteine nucleosidase (231 aa).

The active-site Proton acceptor is the Glu-13. Residues Gly-79, Met-154, and 175 to 176 (ME) contribute to the substrate site. The active-site Proton donor is Asp-199.

The protein belongs to the PNP/UDP phosphorylase family. MtnN subfamily.

It carries out the reaction S-adenosyl-L-homocysteine + H2O = S-(5-deoxy-D-ribos-5-yl)-L-homocysteine + adenine. The catalysed reaction is S-methyl-5'-thioadenosine + H2O = 5-(methylsulfanyl)-D-ribose + adenine. The enzyme catalyses 5'-deoxyadenosine + H2O = 5-deoxy-D-ribose + adenine. Its pathway is amino-acid biosynthesis; L-methionine biosynthesis via salvage pathway; S-methyl-5-thio-alpha-D-ribose 1-phosphate from S-methyl-5'-thioadenosine (hydrolase route): step 1/2. In terms of biological role, catalyzes the irreversible cleavage of the glycosidic bond in both 5'-methylthioadenosine (MTA) and S-adenosylhomocysteine (SAH/AdoHcy) to adenine and the corresponding thioribose, 5'-methylthioribose and S-ribosylhomocysteine, respectively. Also cleaves 5'-deoxyadenosine, a toxic by-product of radical S-adenosylmethionine (SAM) enzymes, into 5-deoxyribose and adenine. The protein is 5'-methylthioadenosine/S-adenosylhomocysteine nucleosidase of Marinomonas sp. (strain MWYL1).